A 569-amino-acid chain; its full sequence is 2-succinyl-5-enolpyruvyl-6-hydroxy-3-cyclohexene-1-carboxylate synthase (569 aa).

Belongs to the TPP enzyme family. MenD subfamily. In terms of assembly, homodimer. It depends on Mg(2+) as a cofactor. The cofactor is Mn(2+). Thiamine diphosphate serves as cofactor.

The enzyme catalyses isochorismate + 2-oxoglutarate + H(+) = 5-enolpyruvoyl-6-hydroxy-2-succinyl-cyclohex-3-ene-1-carboxylate + CO2. Its pathway is quinol/quinone metabolism; 1,4-dihydroxy-2-naphthoate biosynthesis; 1,4-dihydroxy-2-naphthoate from chorismate: step 2/7. The protein operates within quinol/quinone metabolism; menaquinone biosynthesis. Its function is as follows. Catalyzes the thiamine diphosphate-dependent decarboxylation of 2-oxoglutarate and the subsequent addition of the resulting succinic semialdehyde-thiamine pyrophosphate anion to isochorismate to yield 2-succinyl-5-enolpyruvyl-6-hydroxy-3-cyclohexene-1-carboxylate (SEPHCHC). The sequence is that of 2-succinyl-5-enolpyruvyl-6-hydroxy-3-cyclohexene-1-carboxylate synthase from Shewanella sediminis (strain HAW-EB3).